The primary structure comprises 804 residues: SH3-containing GRB2-like protein 3-interacting protein 1 (804 aa).

Disordered stretches follow at residues 1-90 (MMEG…EESH), 124-181 (LSPS…GPPL), and 199-254 (IWGS…QSAT). Basic and acidic residues predominate over residues 16-34 (RKKEKDTDSTGSPDRDGIK). Ser54, Ser80, Ser81, Ser83, Ser125, Ser127, Ser132, and Ser145 each carry phosphoserine. Phosphothreonine is present on residues Thr156 and Thr158. Ser212 carries the post-translational modification Phosphoserine. Residues 221–236 (TGTPPPLPPKNVPATP) show a composition bias toward pro residues. Phosphothreonine is present on residues Thr223 and Thr235. Phosphoserine is present on residues Ser241, Ser263, Ser276, Ser292, and Ser295. A compositionally biased stretch (basic and acidic residues) spans 289–309 (VHFSDTSPEHVTPELTPREKV). The segment at 289–500 (VHFSDTSPEH…LSAATTPTVE (212 aa)) is disordered. Phosphothreonine occurs at positions 300 and 304. Residues 322-346 (SPAPGPLGPPGPTGPPGPPGPPRNV) show a composition bias toward pro residues. Phosphoserine is present on Ser348. The span at 354-369 (EVQKKVAEQTFIKDDY) shows a compositional bias: basic and acidic residues. Residue Ser375 is modified to Phosphoserine. Thr386 is subject to Phosphothreonine. Low complexity predominate over residues 413–432 (TSGASSPARPATPLLPCSST). The segment covering 433–451 (TPPPPPPRPPSRPKLPPGK) has biased composition (pro residues). Composition is skewed to low complexity over residues 458–468 (SRPFSPPIHSS) and 475–498 (PLAR…TTPT). Ser462 carries the phosphoserine modification. An MHD domain is found at 535-803 (TLPVAAAFTE…RFAAGKYLAD (269 aa)). Interaction with DPF motifs-containing proteins stretches follow at residues 537 to 543 (PVAAAFT), 569 to 571 (SFP), 643 to 646 (TYYN), and 789 to 794 (SLIKKR). Residues 625–804 (MPNLMTHLKK…FAAGKYLADN (180 aa)) form a necessary and sufficient to mediate interaction with CANX region.

Interacts with proteins essential or regulating the formation of functional clathrin-coated pits. Interacts with CANX. Interacts with AP2A1. Interacts with EPS15. Interacts with SH3GL3. Interacts with AMPH. Interacts with ITSN1 (via SH3 domains). Interacts with and REPS1.

Its subcellular location is the membrane. It is found in the clathrin-coated pit. Its function is as follows. May function in clathrin-mediated endocytosis. Has both a membrane binding/tubulating activity and the ability to recruit proteins essential to the formation of functional clathrin-coated pits. Has a preference for membranes enriched in phosphatidylserine and phosphoinositides and is required for the endocytosis of the transferrin receptor. May also bind tubulin. May play a role in the regulation of energy homeostasis. In Pongo abelii (Sumatran orangutan), this protein is SH3-containing GRB2-like protein 3-interacting protein 1 (SGIP1).